The primary structure comprises 264 residues: Rano class II histocompatibility antigen, D-1 beta chain (264 aa).

Positions 1-26 (MVWLARDSCVAAVILLLTVLSPPVAL) are cleaved as a signal peptide. The tract at residues 27–120 (VRDPTPRFLE…EISESFLVPR (94 aa)) is beta-1. The Extracellular portion of the chain corresponds to 27-226 (VRDPTPRFLE…AQSTSAQNKK (200 aa)). 2 cysteine pairs are disulfide-bonded: C42-C106 and C144-C200. An N-linked (GlcNAc...) asparagine glycan is attached at N46. Positions 121–215 (TVEPKVTVYP…SLPSPVRVEW (95 aa)) are beta-2. In terms of domain architecture, Ig-like C1-type spans 124–228 (PKVTVYPSKT…STSAQNKKMS (105 aa)). Residues 216-226 (KAQSTSAQNKK) form a connecting peptide region. A helical membrane pass occupies residues 227–248 (MSGVGGIVLGLLFLGAGLFVYF). The Cytoplasmic segment spans residues 249 to 264 (RNQKGQSGLQPTGLLN).

The protein belongs to the MHC class II family.

It is found in the membrane. Functionally, involved in the presentation of foreign antigens to the immune system. This Rattus norvegicus (Rat) protein is Rano class II histocompatibility antigen, D-1 beta chain (RT1-Db1).